Here is a 101-residue protein sequence, read N- to C-terminus: Large ribosomal subunit protein eL43 (101 aa).

Residues 40–62 form a C4-type zinc finger; the sequence is CPSCRSLVRLKRLAFGIWQCPKC.

Belongs to the eukaryotic ribosomal protein eL43 family. The cofactor is Zn(2+).

The sequence is that of Large ribosomal subunit protein eL43 from Pyrobaculum islandicum (strain DSM 4184 / JCM 9189 / GEO3).